Reading from the N-terminus, the 427-residue chain is Enolase (427 aa).

(2R)-2-phosphoglycerate is bound at residue Gln-163. The Proton donor role is filled by Glu-205. 3 residues coordinate Mg(2+): Asp-242, Glu-285, and Asp-312. Lys-337, Arg-366, Ser-367, and Lys-388 together coordinate (2R)-2-phosphoglycerate. The active-site Proton acceptor is Lys-337.

The protein belongs to the enolase family. It depends on Mg(2+) as a cofactor.

The protein localises to the cytoplasm. It is found in the secreted. It localises to the cell surface. The catalysed reaction is (2R)-2-phosphoglycerate = phosphoenolpyruvate + H2O. Its pathway is carbohydrate degradation; glycolysis; pyruvate from D-glyceraldehyde 3-phosphate: step 4/5. Catalyzes the reversible conversion of 2-phosphoglycerate (2-PG) into phosphoenolpyruvate (PEP). It is essential for the degradation of carbohydrates via glycolysis. The polypeptide is Enolase (Beijerinckia indica subsp. indica (strain ATCC 9039 / DSM 1715 / NCIMB 8712)).